We begin with the raw amino-acid sequence, 308 residues long: MRPLAIVGPTGTGKSDLALAVAGLLSAEIAVEVVNADAMQLYRGMDIGTAKLTVVERHGVPHHQLDVLDVTETATVARYQQAAAADVEAIAARGALPVIVGGSMLYVQSLLDQWSFPATDPRVRTRWERRLAEIGVAALHHELADVDAAAAASILPTDGRRIVRALEVVELTGQPFAASAPTIGAPRWGTVIVGLDWDTTVLDERLARRTDLMFERGLVDEVVGLLGVGLREGVTAARALGYAQVLADLDAGGDGSAAREPTFVGTRRYVRRQRSWFRRDHRITWLDGAAGGSAALADKVIRIWRDVS.

8 to 15 (GPTGTGKS) serves as a coordination point for ATP. Residue 10–15 (TGTGKS) participates in substrate binding.

Belongs to the IPP transferase family. As to quaternary structure, monomer. Mg(2+) serves as cofactor.

It catalyses the reaction adenosine(37) in tRNA + dimethylallyl diphosphate = N(6)-dimethylallyladenosine(37) in tRNA + diphosphate. In terms of biological role, catalyzes the transfer of a dimethylallyl group onto the adenine at position 37 in tRNAs that read codons beginning with uridine, leading to the formation of N6-(dimethylallyl)adenosine (i(6)A). The polypeptide is tRNA dimethylallyltransferase (Mycolicibacterium vanbaalenii (strain DSM 7251 / JCM 13017 / BCRC 16820 / KCTC 9966 / NRRL B-24157 / PYR-1) (Mycobacterium vanbaalenii)).